A 238-amino-acid polypeptide reads, in one-letter code: Ribosomal RNA small subunit methyltransferase G (238 aa).

S-adenosyl-L-methionine is bound by residues glycine 80, 131 to 132 (AE), and arginine 148.

Belongs to the methyltransferase superfamily. RNA methyltransferase RsmG family.

It localises to the cytoplasm. Its function is as follows. Specifically methylates the N7 position of a guanine in 16S rRNA. The chain is Ribosomal RNA small subunit methyltransferase G from Thermotoga maritima (strain ATCC 43589 / DSM 3109 / JCM 10099 / NBRC 100826 / MSB8).